The primary structure comprises 904 residues: Toll-like receptor 3 (904 aa).

The N-terminal stretch at 1–26 (MSRPLPYHIYFFTGLLTCWILCTSSA) is a signal peptide. The 26-residue stretch at 27–52 (HKCTVRHEVADCSHLKLTQIPEDLPT) folds into the LRRNT domain. The Lumenal segment spans residues 27–705 (HKCTVRHEVA…PCKDSAPFEL (679 aa)). A disulfide bond links Cys-29 and Cys-38. N-linked (GlcNAc...) asparagine glycans are attached at residues Asn-53, Asn-58, and Asn-71. LRR repeat units lie at residues 53-74 (NITVLNLTHNQLRRLPPANFTR), 77-98 (RLTILDGGFNSISKLEPELCQN), 101-122 (WLEILNLQHNEISQLSDKTFVF), 125-146 (NLTELHLMSNSIQKIQNDPFKN), 149-170 (NLIKLDLSHNGLSSTKLGTQLQ), and 173-196 (NLQELLLSNNKISSLTPEELDFLG). Cys-96 and Cys-123 form a disulfide bridge. The N-linked (GlcNAc...) asparagine glycan is linked to Asn-125. N-linked (GlcNAc...) asparagine glycosylation occurs at Asn-197. LRR repeat units lie at residues 199–220 (SLERLELSSNQIKEFSPGCFHA) and 223–245 (KLSGLSLNNAKLSPSLTEKLCLE). Asn-248, Asn-253, Asn-276, and Asn-292 each carry an N-linked (GlcNAc...) asparagine glycan. 14 LRR repeats span residues 250 to 271 (SIENLSLSSNQLDTISHTTFSG), 276 to 297 (NLTTLDLSRSSLRVMDNDSFAW), 300 to 321 (HLEYLSLEYNNIEHLSSRSFYG), 324 to 345 (NLRHLNLRWSFTRQSISLTSLP), 357 to 378 (CLEYLNMEDNNFPSIKRNTFTG), 381 to 401 (RLKFLSLSNSFSSLRTLTNET), 409 to 430 (PLLLLNLTKNKISKIQSGAFSW), 433 to 455 (HLEVLDLGLNEIGQELTGQEWRG), 466 to 487 (YNKYLELTTNSFTSVPSLQRLM), 508 to 529 (NLVILDLSNNNIANVNDELLKG), 532 to 553 (KLEILDLQHNNLARLWKHANPG), 564 to 585 (HLRILNLGSNGFDEIPVEAFKD), 588 to 609 (ELKSIDLGMNNLNILPQSVFDN), and 612 to 633 (SLKSLSLQKNLITSVQKTVFGP). Residues Asn-399 and Asn-414 are each glycosylated (N-linked (GlcNAc...) asparagine). N-linked (GlcNAc...) asparagine glycosylation is found at Asn-637, Asn-663, and Asn-668. An LRRCT domain is found at 646 to 699 (NPFDCTCESIAWFVNWINSTHTNISELSNHYLCNTPPQYHGFPVMLFDVSPCKD). Intrachain disulfides connect Cys-650–Cys-678 and Cys-652–Cys-697. The helical transmembrane segment at 706-726 (LFMINTNILLIFIFIVLLIHF) threads the bilayer. Topologically, residues 727–904 (EGWRISFYWN…VALGSRNSAH (178 aa)) are cytoplasmic. The TIR domain occupies 754–897 (FEYAAYIIHA…AFHHKLKVAL (144 aa)). At Tyr-759 the chain carries Phosphotyrosine. Residues Lys-812 and Lys-831 each participate in a glycyl lysine isopeptide (Lys-Gly) (interchain with G-Cter in ubiquitin) cross-link. Phosphotyrosine is present on Tyr-858.

The protein belongs to the Toll-like receptor family. Monomer and homodimer; dimerization is triggered by ligand-binding and is required for TLR3 signaling. Interacts (via transmembrane domain) with UNC93B1. Interacts with TICAM1 (via the TIR domain) in response to poly(I:C) and this interaction is enhanced the presence of WDFY1. Interacts with SRC; upon binding of double-stranded RNA. The tyrosine-phosphorylated form (via TIR domain) interacts with WDFY1 (via WD repeat 2) in response to poly(I:C). Post-translationally, ubiquitinated by TRIM3; leading to recognition and sorting of polyubiquitinated TLR3 by the ESCRT complexes. Ubiquitinated by ZNRF1 via 'Lys-63'-linked ubiquitin chains; leading to TLR3 lysosomal trafficking and degradation.

It is found in the endoplasmic reticulum membrane. Its subcellular location is the endosome membrane. It localises to the early endosome. Key component of innate and adaptive immunity. TLRs (Toll-like receptors) control host immune response against pathogens through recognition of molecular patterns specific to microorganisms. TLR3 is a nucleotide-sensing TLR which is activated by double-stranded RNA, a sign of viral infection. Acts via the adapter TRIF/TICAM1, leading to NF-kappa-B activation, cytokine secretion and the inflammatory response. In Boselaphus tragocamelus (Nilgai), this protein is Toll-like receptor 3 (TLR3).